A 225-amino-acid chain; its full sequence is Insulin-induced gene 2 protein (225 aa).

The Cytoplasmic portion of the chain corresponds to 1 to 28; it reads MAEGETKSPGPKKCGPYISSVTSQSVNL. A helical membrane pass occupies residues 29–51; the sequence is MIRGVVLFFIGVFLALVLNLLQI. Residues 52-70 are Lumenal-facing; the sequence is QRNVTLFPPDVIASIFSSA. A helical membrane pass occupies residues 71–88; the sequence is WWVPPCCGTASAVIGLLY. Topologically, residues 89-103 are cytoplasmic; sequence PCIDRHLGEPHKFKR. Residues 104–126 form a helical membrane-spanning segment; sequence EWSSVMRCVAVFVGINHASAKVD. Over 127 to 129 the chain is Lumenal; it reads FDN. Residues 130 to 148 traverse the membrane as a helical segment; sequence NIQLSLTLAALSIGLWWTF. Residues 149-153 lie on the Cytoplasmic side of the membrane; sequence DRSRS. A Phosphoserine modification is found at serine 151. Residues 154–175 traverse the membrane as a helical segment; sequence GFGLGVGIAFLATVVTQLLVYN. The Lumenal segment spans residues 176–189; the sequence is GVYQYTSPDFLYVR. A helical membrane pass occupies residues 190–207; the sequence is SWLPCIFFAGGITMGNIG. Over 208–225 the chain is Cytoplasmic; sequence RQLAMYECKVIAEKSHQE. A Cysteine sulfenic acid (-SOH); alternate modification is found at cysteine 215. A Glycyl cysteine thioester (Cys-Gly) (interchain with G-Cter in ubiquitin); alternate cross-link involves residue cysteine 215. The short motif at 219-225 is the KxHxx element; that stretch reads AEKSHQE.

It belongs to the INSIG family. Interacts with SCAP; interaction is direct and only takes place in the presence of sterols; it prevents interaction between SCAP and the coat protein complex II (COPII). Associates with the SCAP-SREBP complex (composed of SCAP and SREBF1/SREBP1 or SREBF2/SREBP2); association is mediated via its interaction with SCAP and only takes place in the presence of sterols. Interacts with RNF139. Interacts with RNF145. Phosphorylation at Ser-151 by PCK1 reduces binding to oxysterol, disrupting the interaction between INSIG2 and SCAP, thereby promoting nuclear translocation of SREBP proteins (SREBF1/SREBP1 or SREBF2/SREBP2) and subsequent transcription of downstream lipogenesis-related genes. Post-translationally, polyubiquitinated by AMFR/gp78 at Cys-215 in some tissues such as adipose tissues, undifferentiated myoblasts and liver, leading to its degradation. In differentiated myotubes, Cys-215 oxidation prevents ubiquitination at the same site, resulting in protein stabilization. In terms of processing, oxidized at Cys-215 in differentiated myotubes, preventing ubiquitination at the same site, and resulting in protein stabilization.

Its subcellular location is the endoplasmic reticulum membrane. Oxysterol-binding protein that mediates feedback control of cholesterol synthesis by controlling both endoplasmic reticulum to Golgi transport of SCAP and degradation of HMGCR. Acts as a negative regulator of cholesterol biosynthesis by mediating the retention of the SCAP-SREBP complex in the endoplasmic reticulum, thereby blocking the processing of sterol regulatory element-binding proteins (SREBPs) SREBF1/SREBP1 and SREBF2/SREBP2. Binds oxysterol, including 22-hydroxycholesterol, 24-hydroxycholesterol, 25-hydroxycholesterol and 27-hydroxycholesterol, regulating interaction with SCAP and retention of the SCAP-SREBP complex in the endoplasmic reticulum. In presence of oxysterol, interacts with SCAP, retaining the SCAP-SREBP complex in the endoplasmic reticulum, thereby preventing SCAP from escorting SREBF1/SREBP1 and SREBF2/SREBP2 to the Golgi. Sterol deprivation or phosphorylation by PCK1 reduce oxysterol-binding, disrupting the interaction between INSIG2 and SCAP, thereby promoting Golgi transport of the SCAP-SREBP complex, followed by processing and nuclear translocation of SREBF1/SREBP1 and SREBF2/SREBP2. Also regulates cholesterol synthesis by regulating degradation of HMGCR: initiates the sterol-mediated ubiquitin-mediated endoplasmic reticulum-associated degradation (ERAD) of HMGCR via recruitment of the reductase to the ubiquitin ligase RNF139. This chain is Insulin-induced gene 2 protein, found in Pongo abelii (Sumatran orangutan).